We begin with the raw amino-acid sequence, 158 residues long: NADH-quinone oxidoreductase subunit B (158 aa).

4 residues coordinate [4Fe-4S] cluster: Cys37, Cys38, Cys102, and Cys132.

Belongs to the complex I 20 kDa subunit family. NDH-1 is composed of 14 different subunits. Subunits NuoB, C, D, E, F, and G constitute the peripheral sector of the complex. The cofactor is [4Fe-4S] cluster.

It localises to the cell inner membrane. The catalysed reaction is a quinone + NADH + 5 H(+)(in) = a quinol + NAD(+) + 4 H(+)(out). NDH-1 shuttles electrons from NADH, via FMN and iron-sulfur (Fe-S) centers, to quinones in the respiratory chain. Couples the redox reaction to proton translocation (for every two electrons transferred, four hydrogen ions are translocated across the cytoplasmic membrane), and thus conserves the redox energy in a proton gradient. The sequence is that of NADH-quinone oxidoreductase subunit B from Bordetella petrii (strain ATCC BAA-461 / DSM 12804 / CCUG 43448).